Consider the following 95-residue polypeptide: Small ribosomal subunit protein bS6 (95 aa).

It belongs to the bacterial ribosomal protein bS6 family.

Its function is as follows. Binds together with bS18 to 16S ribosomal RNA. The chain is Small ribosomal subunit protein bS6 from Desulfitobacterium hafniense (strain DSM 10664 / DCB-2).